We begin with the raw amino-acid sequence, 821 residues long: Lon protease (821 aa).

Positions 18–216 (LPLMSLREVV…KVYELLQGEI (199 aa)) constitute a Lon N-terminal domain. 368–375 (GPPGVGKT) serves as a coordination point for ATP. The Lon proteolytic domain occupies 606–787 (TSQVGVCTGL…DEVLPQALMA (182 aa)). Catalysis depends on residues S693 and K736.

Belongs to the peptidase S16 family. Homohexamer. Organized in a ring with a central cavity.

It localises to the cytoplasm. It carries out the reaction Hydrolysis of proteins in presence of ATP.. ATP-dependent serine protease that mediates the selective degradation of mutant and abnormal proteins as well as certain short-lived regulatory proteins. Required for cellular homeostasis and for survival from DNA damage and developmental changes induced by stress. Degrades polypeptides processively to yield small peptide fragments that are 5 to 10 amino acids long. Binds to DNA in a double-stranded, site-specific manner. In Nitratidesulfovibrio vulgaris (strain ATCC 29579 / DSM 644 / CCUG 34227 / NCIMB 8303 / VKM B-1760 / Hildenborough) (Desulfovibrio vulgaris), this protein is Lon protease.